The primary structure comprises 294 residues: tRNA pseudouridine synthase B (294 aa).

Asp39 acts as the Nucleophile in catalysis.

It belongs to the pseudouridine synthase TruB family. Type 1 subfamily.

It carries out the reaction uridine(55) in tRNA = pseudouridine(55) in tRNA. Functionally, responsible for synthesis of pseudouridine from uracil-55 in the psi GC loop of transfer RNAs. In Streptococcus pyogenes serotype M28 (strain MGAS6180), this protein is tRNA pseudouridine synthase B.